The sequence spans 179 residues: MARLQDQYREKIAPALIEKFGYTTPMQVPRITKITLNMGVSEAVADKKVMDNAVADMAKIAGQKPVVTKAKKAIAGFKIREDLPIGCMVTLRGVQMYEFLDRFVTVALPRVRDFRGISGRAFDGRGNYNIGVKEQIIFPEIEYDKVDALRGLNISITTTAKTDEECKALLTAFRFPFKN.

This sequence belongs to the universal ribosomal protein uL5 family. Part of the 50S ribosomal subunit; part of the 5S rRNA/L5/L18/L25 subcomplex. Contacts the 5S rRNA and the P site tRNA. Forms a bridge to the 30S subunit in the 70S ribosome.

In terms of biological role, this is one of the proteins that bind and probably mediate the attachment of the 5S RNA into the large ribosomal subunit, where it forms part of the central protuberance. In the 70S ribosome it contacts protein S13 of the 30S subunit (bridge B1b), connecting the 2 subunits; this bridge is implicated in subunit movement. Contacts the P site tRNA; the 5S rRNA and some of its associated proteins might help stabilize positioning of ribosome-bound tRNAs. This Polaromonas naphthalenivorans (strain CJ2) protein is Large ribosomal subunit protein uL5.